Here is a 336-residue protein sequence, read N- to C-terminus: Potassium channel subfamily K member 1 (336 aa).

Over 1–20 (MLQSLAGSSCVRLVERHRSA) the chain is Cytoplasmic. Residues 21–41 (WCFGFLVLGYLLYLVFGAVVF) form a helical membrane-spanning segment. Over 42-103 (SSVELPYEDL…SNASGNWNWD (62 aa)) the chain is Extracellular. An N-linked (GlcNAc...) asparagine glycan is attached at Asn95. An intramembrane region (helical) is located at residues 104-116 (FTSALFFASTVLS). Residues 117–122 (TTGYGH) lie within the membrane without spanning it. Residues 117–122 (TTGYGH) are selectivity filter 1. Residues 123–132 (TVPLSDGGKA) are Extracellular-facing. The helical transmembrane segment at 133-156 (FCIIYSVIGIPFTLLFLTAVVQRV) threads the bilayer. Over 157 to 181 (TIHVTRRPVLYFHVRWGFSKQAVAI) the chain is Cytoplasmic. The helical transmembrane segment at 182 to 202 (VHAVLLGVVTVSCFFFIPAAV) threads the bilayer. Residues 203–211 (FSVLEDDWN) are Extracellular-facing. The segment at residues 212 to 224 (FLESFYFCFISLS) is an intramembrane region (helical). The tract at residues 225–230 (TIGLGD) is selectivity filter 2. The stretch at 225-231 (TIGLGDY) is an intramembrane region. Residues 232–243 (VPGEGYNQKFRE) are Extracellular-facing. Residues 244-267 (LYKIGITCYLLLGLIAMLVVLETF) form a helical membrane-spanning segment. Topologically, residues 268–336 (CELHELKKFR…PALADGASDH (69 aa)) are cytoplasmic. Residue Lys274 forms a Glycyl lysine isopeptide (Lys-Gly) (interchain with G-Cter in SUMO) linkage. The segment at 293–299 (IIEHDQL) is important for intracellular retention in recycling endosomes. The segment at 307 to 336 (QAAGVQEDQKQNEPFVSPQPPALADGASDH) is disordered.

It belongs to the two pore domain potassium channel (TC 1.A.1.8) family. Homodimer; disulfide-linked. Heterodimer with KCNK2; disulfide-linked. In astrocytes, forms mostly heterodimeric potassium channels with KCNK2, with only a minor proportion of functional channels containing homodimeric KCNK1. Interacts with KCNK3 and KCNK9, forming functional heterodimeric channels. Interacts with GNG4. Identified in a complex with PSD and ARF6; interacts only with PSD that is bound to ARF6. Interacts with UBE2I. In terms of processing, sumoylation is controversial. Sumoylated by UBE2I. Not sumoylated when expressed in xenopus oocytes or mammalian cells. Sumoylation inactivates the channel, but does not interfere with expression at the cell membrane. Sumoylation of a single subunit is sufficient to silence the dimeric channel. Sumoylation of KCNK1 is sufficient to silence heterodimeric channels formed by KCNK1 and KCNK3 or KCNK9. Desumoylated by SENP1; this activates the channel. Desumoylated by SENP1; this strongly increases halothane-mediated activation of heterodimeric channels formed with KCNK9. SENP1 treatment has no effect.

It is found in the cell membrane. It localises to the recycling endosome. The protein localises to the synaptic cell membrane. The protein resides in the cytoplasmic vesicle. Its subcellular location is the perikaryon. It is found in the cell projection. It localises to the dendrite. The protein localises to the apical cell membrane. The enzyme catalyses K(+)(in) = K(+)(out). The catalysed reaction is NH4(+)(in) = NH4(+)(out). It carries out the reaction Na(+)(in) = Na(+)(out). It catalyses the reaction Rb(+)(in) = Rb(+)(out). The enzyme catalyses Cs(+)(in) = Cs(+)(out). The catalysed reaction is Li(+)(in) = Li(+)(out). It carries out the reaction L-glutamate(out) = L-glutamate(in). It catalyses the reaction chloride(in) = chloride(out). Ion channel that contributes to passive transmembrane potassium transport and to the regulation of the resting membrane potential in brain astrocytes, but also in kidney and in other tissues. Forms dimeric channels through which potassium ions pass in accordance with their electrochemical gradient. The channel is selective for K(+) ions at physiological potassium concentrations and at neutral pH, but becomes permeable to Na(+) at subphysiological K(+) levels and upon acidification of the extracellular medium. The homodimer has very low potassium channel activity, when expressed in heterologous systems, and can function as weakly inward rectifying potassium channel. Channel activity is modulated by activation of serotonin receptors. Heterodimeric channels containing KCNK1 and KCNK2 have much higher activity, and may represent the predominant form in astrocytes. Heterodimeric channels containing KCNK1 and KCNK3 or KCNK9 have much higher activity. Heterodimeric channels formed by KCNK1 and KCNK9 may contribute to halothane-sensitive currents. Mediates outward rectifying potassium currents in dentate gyrus granule cells and contributes to the regulation of their resting membrane potential. Contributes to the regulation of action potential firing in dentate gyrus granule cells and down-regulates their intrinsic excitability. In astrocytes, the heterodimer formed by KCNK1 and KCNK2 is required for rapid glutamate release in response to activation of G-protein coupled receptors, such as F2R and CNR1. Required for normal ion and water transport in the kidney. Contributes to the regulation of the resting membrane potential of pancreatic beta cells. The low channel activity of homodimeric KCNK1 may be due to sumoylation. The low channel activity may be due to rapid internalization from the cell membrane and retention in recycling endosomes. Permeable to monovalent cations with ion selectivity for K(+) &gt; Rb(+) &gt;&gt; NH4(+) &gt;&gt; Cs(+) = Na(+) = Li(+). This chain is Potassium channel subfamily K member 1, found in Bos taurus (Bovine).